Reading from the N-terminus, the 120-residue chain is Ribonuclease P protein component (120 aa).

This sequence belongs to the RnpA family. As to quaternary structure, consists of a catalytic RNA component (M1 or rnpB) and a protein subunit.

It carries out the reaction Endonucleolytic cleavage of RNA, removing 5'-extranucleotides from tRNA precursor.. In terms of biological role, RNaseP catalyzes the removal of the 5'-leader sequence from pre-tRNA to produce the mature 5'-terminus. It can also cleave other RNA substrates such as 4.5S RNA. The protein component plays an auxiliary but essential role in vivo by binding to the 5'-leader sequence and broadening the substrate specificity of the ribozyme. The sequence is that of Ribonuclease P protein component from Blochmanniella floridana.